Here is a 264-residue protein sequence, read N- to C-terminus: MEYIIQEINSSYLIVGYIDDNDPKENFVEQFIDEFIDKHNKNIIADIICLRIVRNPNEIDLYVLCRSNINLKILDSRFKNINDAILHICSDNLFLPFEQVDDYGIISLLNNRTNIETGTITMLGKKLNYSLIKTESVDKTWLEGSYLELIKRKFIESPFITFETISDAIEYDDKKEDIITLKQYIMIYNDKTITNPENRLQYAVFSDSKGFLIFDDNREFNQIFNNHINYIVHSESSDEEDNDDDIINNDTNNDINNDDIEIKT.

The tract at residues Glu235 to Thr264 is disordered. The segment covering Ser237–Ile247 has biased composition (acidic residues).

This is an uncharacterized protein from Acanthamoeba polyphaga mimivirus (APMV).